Consider the following 202-residue polypeptide: ATP-dependent Clp protease proteolytic subunit (202 aa).

Residue S101 is the Nucleophile of the active site. H126 is a catalytic residue.

This sequence belongs to the peptidase S14 family. As to quaternary structure, component of the chloroplastic Clp protease core complex.

It is found in the plastid. The protein resides in the chloroplast stroma. It catalyses the reaction Hydrolysis of proteins to small peptides in the presence of ATP and magnesium. alpha-casein is the usual test substrate. In the absence of ATP, only oligopeptides shorter than five residues are hydrolyzed (such as succinyl-Leu-Tyr-|-NHMec, and Leu-Tyr-Leu-|-Tyr-Trp, in which cleavage of the -Tyr-|-Leu- and -Tyr-|-Trp bonds also occurs).. Its function is as follows. Cleaves peptides in various proteins in a process that requires ATP hydrolysis. Has a chymotrypsin-like activity. Plays a major role in the degradation of misfolded proteins. The sequence is that of ATP-dependent Clp protease proteolytic subunit from Drimys granadensis.